Reading from the N-terminus, the 331-residue chain is Ornithine carbamoyltransferase (331 aa).

Residues 55–58 (STRT), glutamine 82, arginine 106, and 133–136 (HPTQ) each bind carbamoyl phosphate. L-ornithine is bound by residues asparagine 166, aspartate 230, and 234–235 (SM). Carbamoyl phosphate-binding positions include 272–273 (CL) and arginine 317.

The protein belongs to the aspartate/ornithine carbamoyltransferase superfamily. OTCase family.

Its subcellular location is the cytoplasm. It catalyses the reaction carbamoyl phosphate + L-ornithine = L-citrulline + phosphate + H(+). It participates in amino-acid biosynthesis; L-arginine biosynthesis; L-arginine from L-ornithine and carbamoyl phosphate: step 1/3. Functionally, reversibly catalyzes the transfer of the carbamoyl group from carbamoyl phosphate (CP) to the N(epsilon) atom of ornithine (ORN) to produce L-citrulline. The sequence is that of Ornithine carbamoyltransferase (argF) from Neisseria meningitidis serogroup A / serotype 4A (strain DSM 15465 / Z2491).